Consider the following 292-residue polypeptide: Ribosomal RNA small subunit methyltransferase I (292 aa).

The protein belongs to the methyltransferase superfamily. RsmI family.

The protein resides in the cytoplasm. The catalysed reaction is cytidine(1402) in 16S rRNA + S-adenosyl-L-methionine = 2'-O-methylcytidine(1402) in 16S rRNA + S-adenosyl-L-homocysteine + H(+). In terms of biological role, catalyzes the 2'-O-methylation of the ribose of cytidine 1402 (C1402) in 16S rRNA. The sequence is that of Ribosomal RNA small subunit methyltransferase I from Bacillus subtilis (strain 168).